A 216-amino-acid polypeptide reads, in one-letter code: Transmembrane protein 163a (216 aa).

Residues 1 to 15 (MRLKPHEAQSYRKKA) are Cytoplasmic-facing. A helical transmembrane segment spans residues 16-36 (LWVSWISIVVTLILAVAGFTV). Residues 37–43 (SFMRHSA) lie on the Extracellular side of the membrane. A helical membrane pass occupies residues 44 to 64 (SAFGFAFDATLDVLSSIIVLW). Residues 65-77 (RYSNAAAVHSAHR) are Cytoplasmic-facing. Residues 78-98 (EYIACVILGVIFILSSLCILG) form a helical membrane-spanning segment. Over 99–114 (KAIHDLATKLLPEVDD) the chain is Extracellular. Residues 115 to 135 (FLFSVSIVSGLMCVILAVAKF) traverse the membrane as a helical segment. Residues 136–144 (MLGRILTSR) lie on the Cytoplasmic side of the membrane. A helical membrane pass occupies residues 145 to 165 (ALITDGFNSMVGGIMGFSILI). Residues 166-182 (SAEVFRHYPNVWYLDGT) lie on the Extracellular side of the membrane. Residues 183–203 (IGILIGLVIQAYGVKLLVDMI) form a helical membrane-spanning segment. Residues 204–216 (PRVRQTRNYERFE) lie on the Cytoplasmic side of the membrane.

It belongs to the TMEM163 family.

The protein localises to the cytoplasmic vesicle. Its subcellular location is the secretory vesicle. It is found in the synaptic vesicle membrane. The protein resides in the early endosome membrane. It localises to the late endosome membrane. The protein localises to the lysosome membrane. Its subcellular location is the cell membrane. The catalysed reaction is Zn(2+)(in) = Zn(2+)(out). Zinc ion transporter that mediates zinc efflux and plays a crucial role in intracellular zinc homeostasis. Binds the divalent cations Zn(2+), Ni(2+), and to a minor extent Cu(2+). Is a functional modulator of P2X purinoceptors, including P2RX1, P2RX3, P2RX4 and P2RX7. Plays a role in central nervous system development and is required for myelination, and survival and proliferation of oligodendrocytes. The sequence is that of Transmembrane protein 163a from Danio rerio (Zebrafish).